The chain runs to 457 residues: PDZ and LIM domain protein 7 (457 aa).

Residues 1–85 (MDSFKVVLEG…RLSLGLSRAQ (85 aa)) form the PDZ domain. Ser-78 carries the post-translational modification Phosphoserine. Disordered stretches follow at residues 82–166 (SRAQ…QSRS) and 186–226 (FMKK…PWAV). Phosphothreonine is present on Thr-96. The residue at position 103 (Arg-103) is an Asymmetric dimethylarginine. Ser-111 bears the Phosphoserine mark. Residues 126 to 135 (DSTLRQNGQL) are compositionally biased toward polar residues. The span at 144-157 (SKQRLMEDTEDWRP) shows a compositional bias: basic and acidic residues. Ser-247 is modified (phosphoserine). LIM zinc-binding domains lie at 280-338 (PVCH…VRYA), 339-398 (PNCA…MFGT), and 399-457 (KCRG…FSHV).

As to quaternary structure, specifically binds via its LIM zinc-binding 3 domain (LIM 3) domain to endocytic codes of INSR, but not with those of IGF1R, LDLR, TFRC, or EGFR. Interacts with various PKC isoforms through the LIM zinc-binding domains. Binds to RET in a phosphorylation-independent manner via its LIM zinc-binding domain 2 (LIM 2). Probably part of a complex with SHC and the RET dimer. Interacts with TPM2, TBX4 and TBX5.

Its subcellular location is the cytoplasm. It localises to the cytoskeleton. Its function is as follows. May function as a scaffold on which the coordinated assembly of proteins can occur. May play a role as an adapter that, via its PDZ domain, localizes LIM-binding proteins to actin filaments of both skeletal muscle and nonmuscle tissues. Involved in both of the two fundamental mechanisms of bone formation, direct bone formation (e.g. embryonic flat bones mandible and cranium), and endochondral bone formation (e.g. embryonic long bone development). Plays a role during fracture repair. Involved in BMP6 signaling pathway. This Mus musculus (Mouse) protein is PDZ and LIM domain protein 7 (Pdlim7).